The chain runs to 131 residues: Profilin-3 (131 aa).

A disulfide bond links C13 and C115. Residues 81–97 (AVIRGKKGSGGITIKKT) carry the Involved in PIP2 interaction motif. A Phosphothreonine modification is found at T111.

This sequence belongs to the profilin family. In terms of assembly, occurs in many kinds of cells as a complex with monomeric actin in a 1:1 ratio. Phosphorylated by MAP kinases.

It localises to the cytoplasm. It is found in the cytoskeleton. Binds to actin and affects the structure of the cytoskeleton. At high concentrations, profilin prevents the polymerization of actin, whereas it enhances it at low concentrations. The sequence is that of Profilin-3 from Olea europaea (Common olive).